We begin with the raw amino-acid sequence, 984 residues long: Probable translation initiation factor IF-2 (984 aa).

The DOD-type homing endonuclease domain occupies 94–215 (VNGWYSVTVT…LPLLLLRFGI (122 aa)). Residues 391–608 (TTETHNFVAN…LIAGLSQKYL (218 aa)) enclose the tr-type G domain. GTP is bound by residues 464 to 468 (DTPGH) and 518 to 521 (NKID).

The protein belongs to the TRAFAC class translation factor GTPase superfamily. Classic translation factor GTPase family. IF-2 subfamily. In terms of processing, this protein undergoes a protein self splicing that involves a post-translational excision of the intervening region (intein) followed by peptide ligation.

Its function is as follows. Function in general translation initiation by promoting the binding of the formylmethionine-tRNA to ribosomes. Seems to function along with eIF-2. The polypeptide is Probable translation initiation factor IF-2 (infB) (Pyrococcus furiosus (strain ATCC 43587 / DSM 3638 / JCM 8422 / Vc1)).